The following is a 37-amino-acid chain: Omega-agatoxin-Aa3d (37 aa).

This sequence belongs to the neurotoxin 04 (omega-agtx) family. 03 (type II/III omega-agtx) subfamily. Post-translationally, disulfide bonds are present. As to expression, expressed by the venom gland.

It is found in the secreted. Functionally, omega-agatoxins are antagonists of voltage-gated calcium channels. This toxin blocks calcium channels in insect central neurons but not at peripheral neuromuscular junctions. In vertebrates, it is broadly active against all high-threshold Cav1/CACNA1 channels and Cav2.2/CACNA1B channels. The sequence is that of Omega-agatoxin-Aa3d from Agelenopsis aperta (North American funnel-web spider).